The following is a 539-amino-acid chain: O-phosphoserine--tRNA(Cys) ligase (539 aa).

Residues 188–190 (HMT), 233–235 (SAS), 275–276 (YY), and N327 each bind substrate.

The protein belongs to the class-II aminoacyl-tRNA synthetase family. O-phosphoseryl-tRNA(Cys) synthetase subfamily. As to quaternary structure, homotetramer. Interacts with SepCysS.

It catalyses the reaction tRNA(Cys) + O-phospho-L-serine + ATP = O-phospho-L-seryl-tRNA(Cys) + AMP + diphosphate. In terms of biological role, catalyzes the attachment of O-phosphoserine (Sep) to tRNA(Cys). This chain is O-phosphoserine--tRNA(Cys) ligase, found in Methanosarcina barkeri (strain Fusaro / DSM 804).